A 198-amino-acid chain; its full sequence is Ribonuclease HII (198 aa).

The region spanning 6-198 (EQIAGVDEVG…APCQASLLPD (193 aa)) is the RNase H type-2 domain. A divalent metal cation contacts are provided by Asp-12, Glu-13, and Asp-108.

The protein belongs to the RNase HII family. It depends on Mn(2+) as a cofactor. Mg(2+) serves as cofactor.

Its subcellular location is the cytoplasm. It carries out the reaction Endonucleolytic cleavage to 5'-phosphomonoester.. Its function is as follows. Endonuclease that specifically degrades the RNA of RNA-DNA hybrids. In Acaryochloris marina (strain MBIC 11017), this protein is Ribonuclease HII.